The following is a 258-amino-acid chain: ER membrane protein complex subunit 3 (258 aa).

3 helical membrane passes run 8–28, 123–143, and 173–193; these read PALR…IGIL, VVPQ…FILL, and SISW…LLLG.

It belongs to the EMC3 family.

The protein resides in the cytoplasm. The protein localises to the membrane. The sequence is that of ER membrane protein complex subunit 3 from Schizosaccharomyces pombe (strain 972 / ATCC 24843) (Fission yeast).